Reading from the N-terminus, the 55-residue chain is Caltrin-like protein 2 (55 aa).

Residues 7–55 (AINRPGSCPRVMIYCPARHPPNKCTSDYDCPKPQKCCPGYCGKQCYQPE) enclose the WAP domain.

Post-translationally, glycosylated.

Functionally, inhibits calcium transport into spermatozoa. The sequence is that of Caltrin-like protein 2 from Cavia porcellus (Guinea pig).